The following is a 613-amino-acid chain: Zinc metalloproteinase-disintegrin-like atragin (613 aa).

The signal sequence occupies residues 1 to 20 (MIQALLVIICLAVFPHQGSS). A propeptide spanning residues 21–191 (IILESGNVND…DESIEKTSQL (171 aa)) is cleaved from the precursor. The Peptidase M12B domain maps to 205–400 (KYIEFYVVVD…DRPQCILNKP (196 aa)). 2 residues coordinate Ca(2+): E208 and D292. Cystine bridges form between C316–C395 and C356–C379. Residues H341, H345, and H351 each contribute to the Zn(2+) site. The Ca(2+) site is built by C395, N398, I410, N413, F415, E417, E420, and D423. One can recognise a Disintegrin domain in the interval 408-494 (PPICGNYFVE…ECPTDVFQRN (87 aa)). Disulfide bonds link C411–C440, C422–C435, C424–C430, C434–C457, C448–C454, C453–C479, C466–C486, C473–C505, C498–C510, C517–C567, C532–C575, C542–C577, C545–C555, C562–C601, and C595–C606. N436 is a glycosylation site (N-linked (GlcNAc...) asparagine). The D/ECD-tripeptide signature appears at 472-474 (DCD). Residues D474, L475, E477, D489, and V490 each coordinate Ca(2+). Residues 560 to 574 (VKCGRLFCKRRNSMI) are hypervariable region that may play important roles toward cell migration.

Belongs to the venom metalloproteinase (M12B) family. P-III subfamily. P-IIIa sub-subfamily. In terms of assembly, monomer. Zn(2+) is required as a cofactor. As to expression, expressed by the venom gland.

The protein resides in the secreted. Its function is as follows. Snake venom zinc metalloproteinase that seems to inhibit cell migration. This activity is dominated by the local structure of the hyper-variable region. This Naja atra (Chinese cobra) protein is Zinc metalloproteinase-disintegrin-like atragin.